Reading from the N-terminus, the 252-residue chain is Sugar fermentation stimulation protein homolog (252 aa).

This sequence belongs to the SfsA family.

This is Sugar fermentation stimulation protein homolog from Picosynechococcus sp. (strain ATCC 27264 / PCC 7002 / PR-6) (Agmenellum quadruplicatum).